Reading from the N-terminus, the 814-residue chain is ATP-dependent 6-phosphofructokinase 1 (814 aa).

Residues 1–420 (MDADASTITP…NLETYKLLTK (420 aa)) form an N-terminal catalytic PFK domain 1 region. ATP is bound by residues glycine 55, 118-119 (RS), and 148-151 (GDGS). Aspartate 149 contacts Mg(2+). Residues 194–196 (SID), arginine 231, 238–240 (MGR), glutamate 294, arginine 322, and 328–331 (HVQR) each bind substrate. Aspartate 196 functions as the Proton acceptor in the catalytic mechanism. Residues 421-435 (MRTVEKDNLSEGHKF) form an interdomain linker region. The segment at 436 to 814 (NVAVINVGAP…EEESADSHMF (379 aa)) is C-terminal regulatory PFK domain 2. Beta-D-fructose 2,6-bisphosphate is bound by residues lysine 505, 563 to 567 (TISNN), arginine 601, 608 to 610 (MGG), glutamate 664, arginine 690, 696 to 699 (HVQQ), and arginine 771.

This sequence belongs to the phosphofructokinase type A (PFKA) family. ATP-dependent PFK group I subfamily. Eukaryotic two domain clade 'E' sub-subfamily. Homotetramer. Mg(2+) serves as cofactor.

It localises to the cytoplasm. The enzyme catalyses beta-D-fructose 6-phosphate + ATP = beta-D-fructose 1,6-bisphosphate + ADP + H(+). It functions in the pathway carbohydrate degradation; glycolysis; D-glyceraldehyde 3-phosphate and glycerone phosphate from D-glucose: step 3/4. With respect to regulation, allosterically activated by ADP, AMP, or fructose 2,6-bisphosphate, and allosterically inhibited by ATP or citrate. Functionally, catalyzes the phosphorylation of D-fructose 6-phosphate to fructose 1,6-bisphosphate by ATP, the first committing step of glycolysis. This Caenorhabditis elegans protein is ATP-dependent 6-phosphofructokinase 1.